Reading from the N-terminus, the 162-residue chain is Neuritin-like protein (162 aa).

The first 32 residues, 1 to 32, serve as a signal peptide directing secretion; that stretch reads MMCNCCHCHWRRRCQRLPCALTLLLLLPLAVA. A136 carries the GPI-anchor amidated alanine lipid modification. A propeptide spans 137–162 (removed in mature form); the sequence is PALAPAPAPVLLAAALALACLLGPLA.

It belongs to the neuritin family.

Its subcellular location is the cell membrane. This is Neuritin-like protein (Nrn1l) from Mus musculus (Mouse).